Here is a 134-residue protein sequence, read N- to C-terminus: Secreted RxLR effector protein 1 (134 aa).

The first 22 residues, methionine 1 to alanine 22, serve as a signal peptide directing secretion. A disordered region spans residues serine 32 to arginine 60. Residues serine 37 to serine 52 show a composition bias toward low complexity. A RxLR-dEER motif is present at residues arginine 57–arginine 79.

The protein belongs to the RxLR effector family.

It is found in the secreted. It localises to the host nucleus. In terms of biological role, effector that acts as a broad suppressor of cell death to interrupt plant immunity. Inhibits cell death induced by cell death-inducing proteins, including the PAMP elicitor INF1 from P.infestans. The protein is Secreted RxLR effector protein 1 of Plasmopara viticola (Downy mildew of grapevine).